The primary structure comprises 437 residues: Succinate--CoA ligase [ADP-forming] subunit beta, hydrogenosomal (437 aa).

A hydrogenosome-targeting transit peptide spans 1-27 (MLANVTRSTSKAAPALASIAQTAQKRF). Residues 36-278 (MNLLHEYNVN…TTQEDPREVA (243 aa)) enclose the ATP-grasp domain. Residues lysine 73, 80-82 (GRG), and glutamate 141 contribute to the ATP site. Residues asparagine 233 and aspartate 247 each contribute to the Mg(2+) site. Residues asparagine 299 and 356 to 358 (GIM) each bind substrate.

This sequence belongs to the succinate/malate CoA ligase beta subunit family. Heterodimer of an alpha and a beta subunit. Mg(2+) is required as a cofactor.

The protein resides in the hydrogenosome. The catalysed reaction is succinate + ATP + CoA = succinyl-CoA + ADP + phosphate. The protein operates within carbohydrate metabolism; tricarboxylic acid cycle; succinate from succinyl-CoA (ligase route): step 1/1. Functionally, succinyl-CoA synthetase functions in the citric acid cycle (TCA), coupling the hydrolysis of succinyl-CoA to the synthesis of ATP and thus represents the only step of substrate-level phosphorylation in the TCA. The beta subunit provides nucleotide specificity of the enzyme and binds the substrate succinate, while the binding sites for coenzyme A and phosphate are found in the alpha subunit. In Neocallimastix frontalis (Rumen fungus), this protein is Succinate--CoA ligase [ADP-forming] subunit beta, hydrogenosomal.